The following is a 410-amino-acid chain: LL-diaminopimelate aminotransferase (410 aa).

Substrate contacts are provided by Y15 and G42. Pyridoxal 5'-phosphate is bound by residues Y72, 108–109, Y132, N187, Y218, and 246–248; these read SK and SFS. Positions 109, 132, and 187 each coordinate substrate. K249 is modified (N6-(pyridoxal phosphate)lysine). Pyridoxal 5'-phosphate-binding residues include R257 and N292. Residues N292 and R388 each coordinate substrate.

This sequence belongs to the class-I pyridoxal-phosphate-dependent aminotransferase family. LL-diaminopimelate aminotransferase subfamily. As to quaternary structure, homodimer. Requires pyridoxal 5'-phosphate as cofactor.

It catalyses the reaction (2S,6S)-2,6-diaminopimelate + 2-oxoglutarate = (S)-2,3,4,5-tetrahydrodipicolinate + L-glutamate + H2O + H(+). It functions in the pathway amino-acid biosynthesis; L-lysine biosynthesis via DAP pathway; LL-2,6-diaminopimelate from (S)-tetrahydrodipicolinate (aminotransferase route): step 1/1. Its function is as follows. Involved in the synthesis of meso-diaminopimelate (m-DAP or DL-DAP), required for both lysine and peptidoglycan biosynthesis. Catalyzes the direct conversion of tetrahydrodipicolinate to LL-diaminopimelate. The sequence is that of LL-diaminopimelate aminotransferase from Thermosynechococcus vestitus (strain NIES-2133 / IAM M-273 / BP-1).